A 100-amino-acid chain; its full sequence is Small ribosomal subunit protein uS14c (100 aa).

This sequence belongs to the universal ribosomal protein uS14 family. In terms of assembly, part of the 30S ribosomal subunit.

Its subcellular location is the plastid. It is found in the chloroplast. Functionally, binds 16S rRNA, required for the assembly of 30S particles. The polypeptide is Small ribosomal subunit protein uS14c (Chaetosphaeridium globosum (Charophycean green alga)).